We begin with the raw amino-acid sequence, 307 residues long: Protein pxr1 (307 aa).

Positions 1 to 11 are enriched in basic residues; the sequence is MGLAAPRKKTK. Disordered stretches follow at residues 1–25 and 144–234; these read MGLA…SRST and NATA…SDCD. The segment covering 15 to 25 has biased composition (polar residues); that stretch reads DPNNTSWSRST. The 55-residue stretch at 25 to 79 folds into the G-patch domain; it reads TDGFGHRILKAQGWTPGGFLGARNATHSDLFTTASASHIRVVLKDDTLGLGARPK. Composition is skewed to basic and acidic residues over residues 154-168 and 206-221; these read LRVD…HESE and GKEL…EKKQ.

Belongs to the PINX1 family.

The protein localises to the nucleus. It is found in the nucleolus. Functionally, involved in rRNA-processing at A0, A1 and A2 sites and negatively regulates telomerase. The protein is Protein pxr1 (pxr1) of Neosartorya fischeri (strain ATCC 1020 / DSM 3700 / CBS 544.65 / FGSC A1164 / JCM 1740 / NRRL 181 / WB 181) (Aspergillus fischerianus).